The primary structure comprises 546 residues: Arginine--tRNA ligase (546 aa).

The 'HIGH' region motif lies at 122 to 132; it reads ANPTGPFTVGH.

Belongs to the class-I aminoacyl-tRNA synthetase family. Monomer.

It localises to the cytoplasm. The catalysed reaction is tRNA(Arg) + L-arginine + ATP = L-arginyl-tRNA(Arg) + AMP + diphosphate. In Thermotoga petrophila (strain ATCC BAA-488 / DSM 13995 / JCM 10881 / RKU-1), this protein is Arginine--tRNA ligase.